A 224-amino-acid chain; its full sequence is Pre-hexon-linking protein VIII (224 aa).

Thr-64 carries the phosphothreonine; by host modification. A propeptide spanning residues 112 to 154 (RQLCPSQIGIKSPVLAGTGIQLSEDIPSASWIRPDGIFQLGGG) is cleaved from the precursor.

The protein belongs to the adenoviridae hexon-linking protein family. Interacts with the peripentonal hexons as well as the hexons in the facets. Part of a complex composed of the core-capsid bridging protein, the endosome lysis protein VI and the hexon-linking protein VIII; these interactions bridge the virus core to the capsid. Cleaved by the viral protease during virion maturation. May cause the middle segment to be shed from the capsid.

It localises to the virion. Its subcellular location is the host nucleus. In terms of biological role, structural component of the virion that acts as a cement protein on the capsid interior and which glue the peripentonal hexons and group-of-nine hexons together. This chain is Pre-hexon-linking protein VIII, found in Canis lupus familiaris (Dog).